The sequence spans 186 residues: MIAASDLKAGMTFEQDGKLIKVMEASHHKPGKGNTVMRMKLKDVRTGSTTDTTMRPDEKVKKAHIDTKPVQYLYSQDDMAIFMDLETYEQYEVPTALIEEELKYLLENMEVKIQFYGEEVIGLTLPTTVILRVAETQPSIKGATVTGSGKPATMETGLVVNVPDFVEADELLEINTAEGTYLKRAK.

It belongs to the elongation factor P family.

Its subcellular location is the cytoplasm. The protein operates within protein biosynthesis; polypeptide chain elongation. Its function is as follows. Involved in peptide bond synthesis. Stimulates efficient translation and peptide-bond synthesis on native or reconstituted 70S ribosomes in vitro. Probably functions indirectly by altering the affinity of the ribosome for aminoacyl-tRNA, thus increasing their reactivity as acceptors for peptidyl transferase. The sequence is that of Elongation factor P from Enterococcus faecalis (strain ATCC 700802 / V583).